Reading from the N-terminus, the 261-residue chain is MASNNDSIKKTLGVVIGLSLVCSIIVSTAAVGLRDKQKANAVLDKQSKIVEVAGIEANGKKVPELYAEYIEPRLVDFATGEFVEEAADGSKAANYDQRKAAKDNATSIKLTAEQDKAKIIRRANTGIVYLVKNGDDVSKVIIPVHGNGLWSMMYAFVAVETDGNTVSGITYYEQGETPGLGGEVENPSWRAQWVGKKLFDENHKPAIKVVKGGAPAGSEHGVDGLSGATLTGNGVQGTFDFWLGDMGFGPFLAKVRDGGLN.

A helical transmembrane segment spans residues Leu12 to Gly32. Thr229 bears the FMN phosphoryl threonine mark.

The protein belongs to the NqrC family. Composed of six subunits; NqrA, NqrB, NqrC, NqrD, NqrE and NqrF. FMN serves as cofactor.

It localises to the cell inner membrane. It carries out the reaction a ubiquinone + n Na(+)(in) + NADH + H(+) = a ubiquinol + n Na(+)(out) + NAD(+). Functionally, NQR complex catalyzes the reduction of ubiquinone-1 to ubiquinol by two successive reactions, coupled with the transport of Na(+) ions from the cytoplasm to the periplasm. NqrA to NqrE are probably involved in the second step, the conversion of ubisemiquinone to ubiquinol. In Vibrio parahaemolyticus serotype O3:K6 (strain RIMD 2210633), this protein is Na(+)-translocating NADH-quinone reductase subunit C.